The sequence spans 189 residues: Mercury resistance operon ORF3 (189 aa).

The segment at residues 1-27 (MTSPSPTARRTRLRRRTALALAAAATA) is a signal peptide (tat-type signal). In terms of domain architecture, Thioredoxin spans 38–189 (TKANTPATRA…IQDALKKAGA (152 aa)).

In terms of processing, predicted to be exported by the Tat system. The position of the signal peptide cleavage has not been experimentally proven.

It localises to the secreted. Functionally, probable mercury binding protein. The sequence is that of Mercury resistance operon ORF3 from Streptomyces lividans.